Reading from the N-terminus, the 247-residue chain is ATP synthase subunit a, chloroplastic (247 aa).

Transmembrane regions (helical) follow at residues 38-58 (QVLI…TIAV), 95-115 (VPFI…GALL), 134-154 (INTT…AGLT), 199-219 (LVVV…VMFL), and 220-240 (GLFT…AYIG).

It belongs to the ATPase A chain family. In terms of assembly, F-type ATPases have 2 components, CF(1) - the catalytic core - and CF(0) - the membrane proton channel. CF(1) has five subunits: alpha(3), beta(3), gamma(1), delta(1), epsilon(1). CF(0) has four main subunits: a, b, b' and c.

It localises to the plastid. The protein localises to the chloroplast thylakoid membrane. In terms of biological role, key component of the proton channel; it plays a direct role in the translocation of protons across the membrane. This Buxus microphylla (Littleleaf boxwood) protein is ATP synthase subunit a, chloroplastic.